A 527-amino-acid chain; its full sequence is UPF0053 protein YegH (527 aa).

7 helical membrane passes run 14 to 34 (ITLI…IAIL), 51 to 71 (LLLA…LVTL), 81 to 101 (FTFS…LFKA), 122 to 142 (GAKF…FSLD), 145 to 165 (ITAV…VIAI), 185 to 205 (IVIL…AEGF), and 207 to 227 (FVIP…IEAL). CBS domains follow at residues 306–366 (MTSR…GEPL) and 371–429 (LIRQ…PNEV).

The protein belongs to the UPF0053 family.

The protein localises to the cell membrane. This is UPF0053 protein YegH (yegH) from Shigella flexneri.